The chain runs to 253 residues: Tropomyosin-1 (253 aa).

A coiled-coil region spans residues 7–253 (VNKLVRLQGK…MDDVGDDDTQ (247 aa)).

This sequence belongs to the tropomyosin family. In terms of assembly, homodimer.

Its function is as follows. Tropomyosin, in association with the troponin complex, plays a central role in the calcium dependent regulation of muscle contraction. The sequence is that of Tropomyosin-1 (TROP1) from Hydra vulgaris (Hydra).